An 879-amino-acid chain; its full sequence is Alanine--tRNA ligase (879 aa).

4 residues coordinate Zn(2+): His567, His571, Cys669, and His673.

The protein belongs to the class-II aminoacyl-tRNA synthetase family. It depends on Zn(2+) as a cofactor.

It is found in the cytoplasm. The catalysed reaction is tRNA(Ala) + L-alanine + ATP = L-alanyl-tRNA(Ala) + AMP + diphosphate. In terms of biological role, catalyzes the attachment of alanine to tRNA(Ala) in a two-step reaction: alanine is first activated by ATP to form Ala-AMP and then transferred to the acceptor end of tRNA(Ala). Also edits incorrectly charged Ser-tRNA(Ala) and Gly-tRNA(Ala) via its editing domain. The sequence is that of Alanine--tRNA ligase from Lactobacillus acidophilus (strain ATCC 700396 / NCK56 / N2 / NCFM).